Here is a 188-residue protein sequence, read N- to C-terminus: Gag polyprotein (188 aa).

Residues Val77 to Pro90 are compositionally biased toward basic and acidic residues. The tract at residues Val77 to Val99 is disordered. Positions Pro121–Tyr124 match the PPXY motif motif. Residues Tyr130–Pro166 are disordered.

Specific enzymatic cleavages in vivo yield mature proteins.

Its subcellular location is the virion. The sequence is that of Gag polyprotein (ev-2) from Galliformes (EV-2).